Here is a 94-residue protein sequence, read N- to C-terminus: Integration host factor subunit beta (94 aa).

The protein belongs to the bacterial histone-like protein family. In terms of assembly, heterodimer of an alpha and a beta chain.

Functionally, this protein is one of the two subunits of integration host factor, a specific DNA-binding protein that functions in genetic recombination as well as in transcriptional and translational control. This Azoarcus sp. (strain BH72) protein is Integration host factor subunit beta.